Consider the following 547-residue polypeptide: Chaperonin GroEL (547 aa).

ATP contacts are provided by residues 30–33 (TLGP), Lys-51, 87–91 (DGTTT), Gly-415, and Asp-495.

This sequence belongs to the chaperonin (HSP60) family. In terms of assembly, forms a cylinder of 14 subunits composed of two heptameric rings stacked back-to-back. Interacts with the co-chaperonin GroES.

The protein localises to the cytoplasm. It catalyses the reaction ATP + H2O + a folded polypeptide = ADP + phosphate + an unfolded polypeptide.. Functionally, together with its co-chaperonin GroES, plays an essential role in assisting protein folding. The GroEL-GroES system forms a nano-cage that allows encapsulation of the non-native substrate proteins and provides a physical environment optimized to promote and accelerate protein folding. This chain is Chaperonin GroEL, found in Shewanella halifaxensis (strain HAW-EB4).